The sequence spans 430 residues: Serine--tRNA ligase (430 aa).

238 to 240 provides a ligand contact to L-serine; sequence TAE. ATP is bound at residue 269 to 271; it reads RRE. E292 is an L-serine binding site. Position 356 to 359 (356 to 359) interacts with ATP; sequence EISS. L-serine is bound at residue S392.

Belongs to the class-II aminoacyl-tRNA synthetase family. Type-1 seryl-tRNA synthetase subfamily. As to quaternary structure, homodimer. The tRNA molecule binds across the dimer.

Its subcellular location is the cytoplasm. The enzyme catalyses tRNA(Ser) + L-serine + ATP = L-seryl-tRNA(Ser) + AMP + diphosphate + H(+). It catalyses the reaction tRNA(Sec) + L-serine + ATP = L-seryl-tRNA(Sec) + AMP + diphosphate + H(+). It functions in the pathway aminoacyl-tRNA biosynthesis; selenocysteinyl-tRNA(Sec) biosynthesis; L-seryl-tRNA(Sec) from L-serine and tRNA(Sec): step 1/1. Functionally, catalyzes the attachment of serine to tRNA(Ser). Is also able to aminoacylate tRNA(Sec) with serine, to form the misacylated tRNA L-seryl-tRNA(Sec), which will be further converted into selenocysteinyl-tRNA(Sec). In Synechocystis sp. (strain ATCC 27184 / PCC 6803 / Kazusa), this protein is Serine--tRNA ligase.